A 176-amino-acid polypeptide reads, in one-letter code: MTNTGLVQSFSQIEPNVLGLETSVTSQICEGLNRALASFQVLYLQYQKHHFTVQGAEFYSLHEFFEDSYGSVKDHVHDLGERLNGLGGVPVAHPLKLAELTCFAIEEDGVFNCRTMLEHDLAAEQAILSLLRRLTAQVESLGDRATRYLLEGILLKTEERAYHIAHFLAPDSLKLA.

Belongs to the Dps family. Hexamer.

Its function is as follows. Involved in protection of chromosomal DNA from damage under nutrient-limited and oxidative stress conditions. Binds heme. The polypeptide is Nutrient stress-induced DNA-binding protein (dpsA) (Synechococcus sp. (strain ATCC 27144 / PCC 6301 / SAUG 1402/1) (Anacystis nidulans)).